The chain runs to 116 residues: Signal recognition particle 14 kDa protein (116 aa).

Belongs to the SRP14 family. Heterodimer with ZK512.4/SRP9; binds RNA as heterodimer. Component of a signal recognition particle (SRP) complex that consists of a 7SL RNA molecule of 300 nucleotides and six protein subunits: srpa-72, srpa-68, SRP54, F37F2.2/SRP19, F25G6.8/SRP14 and ZK512.4/SRP9.

It is found in the cytoplasm. In terms of biological role, component of the signal recognition particle (SRP) complex, a ribonucleoprotein complex that mediates the cotranslational targeting of secretory and membrane proteins to the endoplasmic reticulum (ER). F37F2.2/srpa-19 together with F25G6.8/srpa-14 and the Alu portion of the SRP RNA, constitutes the elongation arrest domain of SRP. The complex of F37F2.2/srpa-19 and F25G6.8/srpa-14 is required for SRP RNA binding. The sequence is that of Signal recognition particle 14 kDa protein from Caenorhabditis elegans.